A 377-amino-acid chain; its full sequence is Tyrosine-protein phosphatase 2 (377 aa).

The region spanning 27 to 347 (IDKEFNFILQ…RFCYLAISEA (321 aa)) is the Tyrosine-protein phosphatase domain. The interval 77–137 (IDDDDDDEDD…EDHGGSGDEG (61 aa)) is disordered. Over residues 78–91 (DDDDDDEDDNEDDI) the composition is skewed to acidic residues. Residues 92–102 (IVSNNNNNNNN) show a composition bias toward low complexity. Polar residues predominate over residues 113–123 (GSSGQSDVMSN). Cysteine 281 (phosphocysteine intermediate) is an active-site residue.

This sequence belongs to the protein-tyrosine phosphatase family. Non-receptor class subfamily.

The catalysed reaction is O-phospho-L-tyrosyl-[protein] + H2O = L-tyrosyl-[protein] + phosphate. The sequence is that of Tyrosine-protein phosphatase 2 (ptpB) from Dictyostelium discoideum (Social amoeba).